The sequence spans 79 residues: MSEIGERVKKIVVEHLGVEPEKVVDNASFIDDLGADSLDTVELVMAFEEEFGCEIPDDAAETILTVGDATKFLEKNAKS.

The Carrier domain maps to 2 to 77 (SEIGERVKKI…DATKFLEKNA (76 aa)). The residue at position 37 (S37) is an O-(pantetheine 4'-phosphoryl)serine.

Belongs to the acyl carrier protein (ACP) family. Post-translationally, 4'-phosphopantetheine is transferred from CoA to a specific serine of apo-ACP by AcpS. This modification is essential for activity because fatty acids are bound in thioester linkage to the sulfhydryl of the prosthetic group.

The protein resides in the cytoplasm. The protein operates within lipid metabolism; fatty acid biosynthesis. Carrier of the growing fatty acid chain in fatty acid biosynthesis. The polypeptide is Acyl carrier protein (Nitrobacter hamburgensis (strain DSM 10229 / NCIMB 13809 / X14)).